The following is a 1462-amino-acid chain: MDPRKNLASVGTMPEQERQVTAKEASRKILSKLALPGRPWEQSMKQSFAFDNVGYEGGLDSTSSSPAATDVVNILGMTCHSCVKSIEDRISSLKGIVNIKVSLEQGSATVRYVPSVMNLQQICLQIEDMGFEASAAEGKAASWPSRSSPAQEAVVKLRVEGMTCQSCVSSIEGKIRKLQGVVRIKVSLSNQEAVITYQPYLIQPEDLRDHICDMGFEAAIKNRTAPLRLGPIDVNKLESTNLKKETVSPVQISNHFETLGHQGSYLATLPLRIDGMHCKSCVLNIEGNIGQLPGVQNIHVSLENKTAQIQYDPSCVTPMFLQTAIEALPPGHFKVSLPDGVEENEPQSGSSQRHQEQGPGRTAVLTISGITCASSVQPIEDMLSQRKGVQQTSISLAEGTGAVLYDPSIVSLDELRTAVEDMGFEVSVNSETFTINPVRNFKSGNSVPQTMGDIAGSVQKMAPDTRGLPTHQGPGHSSETPSSPGATASQKCFVQIKGMTCASCVSNIERSLQRHAGILSVLVALMSGKAEVKYDPEIIQSPRIAQLIQDLGFEASVMEDNTVSEGDIELIITGMTCASCVHNIESKLTRTNGITYASVALATSKAHVKFDPEIVGPRDIIKIIEEIGFHASLAQRNPNAHHLDHKTEIKQWKKSFLCSLVFGIPVMGLMVYMLIPSSTPQETMVLDHNIIPGLSVLNLIFFILCTFVQFLGGWYFYVQAYKSLRHRSANMDVLIVLATTIAYAYSLVILVVAVAEKAEKSPVTFFDTPPMLFVFIALGRWLEHVAKSKTSEALAKLMSLQATEATVVTLGEDNLILREEQVPMELVQRGDVIKVVPGGKFPVDGKVLEGNTMADESLITGEAMPVTKKPGSIVIAGSINAHGSVLLKATHVGNDTTLAQIVKLVEEAQMSKAPIQQLADRFSGYFVPFIIIISTLTLVVWIVIGFVDFGVVQKYFPSPSKHISQTEVIIRFAFQTSITVLCIACPCSLGLATPTAVMVGTGVAAQNGVLIKGGKPLEMAHKIKTVMFDKTGTITHGVPRVMRFLLLADVATLPLRKVLAVVGTAEASSEHPLGVAVTKYCKEELGTETLGYSTDFQAVPGCGISCKVSNVEGILARSDLTAHPVGVGNPPTGEGAGPQTFSVLIGNREWMRRNGLTISSDISDAMTDHEMKGQTAILVAIDGVLCGMIAIADAVKPEAALAIYTLKSMGVDVALITGDNRKTARAIATQVGINKVFAEVLPSHKVAKVQELQNEGKKVAMVGDGVNDSPALAQADVGIAIGTGTDVAIEAADVVLIRNDLLDVVASIHLSKRTVRRIRVNLVLALIYNMVGIPIAAGVFMPIGIVLQPWMGSAAMAASSVSVVLSSLQLKCYRKPDLERYEAQAHGRMKPLSASQVSVHIGMDDRRRDSPRATAWDQVSYVSQVSLSSLTSDRLSRHGGAAEDGGDKWSLLLSDRDEEQCI.

A disordered region spans residues 1 to 23; sequence MDPRKNLASVGTMPEQERQVTAK. Residues 1–655 lie on the Cytoplasmic side of the membrane; that stretch reads MDPRKNLASV…KTEIKQWKKS (655 aa). HMA domains are found at residues 68–134, 153–219, 267–333, and 361–427; these read ATDV…FEAS, AVVK…FEAA, ATLP…PGHF, and RTAV…FEVS. C79, C82, C164, C167, C278, and C281 together coordinate Cu(+). The tract at residues 333–361 is disordered; the sequence is FKVSLPDGVEENEPQSGSSQRHQEQGPGR. C372 is a binding site for Cu(+). The segment at 460 to 487 is disordered; that stretch reads KMAPDTRGLPTHQGPGHSSETPSSPGAT. The span at 475–487 shows a compositional bias: polar residues; the sequence is GHSSETPSSPGAT. 2 positions are modified to phosphoserine: S478 and S483. 2 HMA domains span residues 490-556 and 566-632; these read QKCF…FEAS and GDIE…FHAS. C501, C504, C577, and C580 together coordinate Cu(+). The chain crosses the membrane as a helical span at residues 656–677; sequence FLCSLVFGIPVMGLMVYMLIPS. The Extracellular segment spans residues 678 to 699; sequence STPQETMVLDHNIIPGLSVLNL. A helical membrane pass occupies residues 700–719; it reads IFFILCTFVQFLGGWYFYVQ. Topologically, residues 720 to 726 are cytoplasmic; the sequence is AYKSLRH. A helical transmembrane segment spans residues 727–747; it reads RSANMDVLIVLATTIAYAYSL. The Extracellular segment spans residues 748 to 766; sequence VILVVAVAEKAEKSPVTFF. A helical transmembrane segment spans residues 767–787; it reads DTPPMLFVFIALGRWLEHVAK. Over 788–921 the chain is Cytoplasmic; the sequence is SKTSEALAKL…KAPIQQLADR (134 aa). A helical membrane pass occupies residues 922–944; sequence FSGYFVPFIIIISTLTLVVWIVI. At 945 to 974 the chain is on the extracellular side; that stretch reads GFVDFGVVQKYFPSPSKHISQTEVIIRFAF. Residues 975–996 form a helical membrane-spanning segment; that stretch reads QTSITVLCIACPCSLGLATPTA. Residues 997-1319 lie on the Cytoplasmic side of the membrane; sequence VMVGTGVAAQ…LSKRTVRRIR (323 aa). The 4-aspartylphosphate intermediate role is filled by D1029. 2 residues coordinate Mg(2+): D1264 and D1268. Residues 1320-1337 traverse the membrane as a helical segment; the sequence is VNLVLALIYNMVGIPIAA. The Extracellular segment spans residues 1338–1348; that stretch reads GVFMPIGIVLQ. Residues 1349–1368 traverse the membrane as a helical segment; that stretch reads PWMGSAAMAASSVSVVLSSL. Topologically, residues 1369 to 1462 are cytoplasmic; sequence QLKCYRKPDL…LSDRDEEQCI (94 aa). 2 positions are modified to phosphoserine: S1395 and S1454.

This sequence belongs to the cation transport ATPase (P-type) (TC 3.A.3) family. Type IB subfamily. Monomer. Interacts with COMMD1/MURR1. Interacts with DCTN4, in a copper-dependent manner. Interacts with ATOX1. Interacts (via C-terminus) with ZBTB16/PLZF. In terms of tissue distribution, detected in liver and kidney.

It localises to the golgi apparatus. It is found in the trans-Golgi network membrane. The protein localises to the late endosome. The catalysed reaction is Cu(+)(in) + ATP + H2O = Cu(+)(out) + ADP + phosphate + H(+). Functionally, copper ion transmembrane transporter involved in the export of copper out of the cells, such as the efflux of hepatic copper into the bile. This Mus musculus (Mouse) protein is Copper-transporting ATPase 2 (Atp7b).